Reading from the N-terminus, the 564-residue chain is Protein glycosylation K (564 aa).

The Cytoplasmic segment spans residues 1-15 (MLKKLFFILSKEDKN). A helical transmembrane segment spans residues 16–38 (FLFFLLVFSVFISFIETFAISLV). An ABC transmembrane type-1 domain is found at 17–319 (LFFLLVFSVF…IITSYHDLLY (303 aa)). The Extracellular segment spans residues 39–76 (MPFITLASDFSYFDRNKYLISLKEYLNIPVFEIIVYFG). Residues 46–67 (SDFSYFDRNKYLISLKEYLNIP) are important for stimulation of ATPase activity by lipid-linked oligosaccharides and subsequent translocation of lipid-linked oligosaccharides. Residues 77 to 98 (VGLIVFYVFRALLNAYYFHLLA) traverse the membrane as a helical segment. Topologically, residues 99 to 149 (RFSKGRYHAIAYKVFSKFLNINYEKFTQKNQSEILKSITGEVYNLSTMISS) are cytoplasmic. The chain crosses the membrane as a helical span at residues 150-170 (FLLLMSEIFVVLLLYALMLLI). Over 171-173 (NYK) the chain is Extracellular. Residues 174-197 (ITLFLSIFMVLNAFILVKILSPII) form a helical membrane-spanning segment. The Cytoplasmic portion of the chain corresponds to 198–254 (KKAGVRREEAMKNFFEILNTNLNNFKFIKLKTKEDGVLSLFKAQSEAFSKANITNES). The chain crosses the membrane as a helical span at residues 255–276 (VAAVPRIYLEGIGFCVLVFIVV). The Extracellular portion of the chain corresponds to 277–292 (FLVLKNESDISGILST). Residues 293-314 (ISIFVLALYRLMPSANRIITSY) traverse the membrane as a helical segment. Residues 315–564 (HDLLYYHSSL…LEHGKLKEEK (250 aa)) lie on the Cytoplasmic side of the membrane. In terms of domain architecture, ABC transporter spans 349–564 (LKICNLSFGY…LEHGKLKEEK (216 aa)). 382-389 (GESGCGKS) contacts ATP.

It belongs to the ABC transporter superfamily. In terms of assembly, homodimer; domain-swapped. Helices that arise in transmembrane regions 4 and 5 from one subunit cross over and contact the nucleotide-binding domain from the other subunit.

The protein localises to the cell inner membrane. The enzyme catalyses ATP + H2O + lipopolysaccharideSide 1 = ADP + phosphate + lipopolysaccharideSide 2.. Its pathway is protein modification; protein glycosylation. Mediates the ATP-dependent translocation of the undecaprenylpyrophosphate-linked heptasaccharide intermediate across the cell membrane; this is an essential step during the N-linked protein glycosylation pathway. Transport across the membrane is effected via ATP-driven conformation changes. Most likely, only the polar and charged part of the glycolipid enter the substrate-binding cavity, and the lipid tail remains exposed to the membrane lipids during the transmembrane flipping process. The protein is Protein glycosylation K (pglK) of Campylobacter jejuni subsp. jejuni serotype O:2 (strain ATCC 700819 / NCTC 11168).